The primary structure comprises 353 residues: Trans-enoyl reductase RAP2 (353 aa).

Residue 46 to 49 (CDHK) coordinates NADP(+). 131-138 (TGLSTIGM) contributes to the substrate binding site. Residues 189–192 (SPRN), tyrosine 207, and 254–255 (LE) each bind NADP(+). 274–278 (GMALL) is a substrate binding site. 343 to 344 (VS) is an NADP(+) binding site.

The protein belongs to the zinc-containing alcohol dehydrogenase family. Monomer.

It participates in secondary metabolite biosynthesis. Trans-enoyl reductase; part of the gene cluster that mediates the biosynthesis of a tyrosine-derived cytochalasan acting as a fungal signal recognized by resistant rice plants and leads to avirulence in Pi33 resistant rice cultivars. The first step in the pathway is catalyzed by the hybrid PKS-NRPS ACE1, assisted by the enoyl reductase RAP1, that are responsible for fusion of the tyrosine precursor and the polyketide backbone. The polyketide synthase module (PKS) of ACE1 is responsible for the synthesis of the polyketide backbone and the downstream nonribosomal peptide synthetase (NRPS) amidates the carboxyl end of the polyketide with the tyrosine precursor. Because ACE1 lacks a designated enoylreductase (ER) domain, the required activity is provided the enoyl reductase RAP1. Reduction by the hydrolyase ORFZ, followed by dehydration and intra-molecular Diels-Alder cyclization by the Diels-Alderase ORF3 then yield the required isoindolone-fused macrocycle. A number of oxidative steps catalyzed by the tailoring enzymes identified within the cluster, including cytochrome P450 monooxygenases CYP1 to CYP4, the FAD-linked oxidoreductase OXR2 and the short-chain dehydrogenase/reductase OXR1, are further required to afford the final cytochalasans that confer avirulence and which have still to be identified. The monooxygenase CYP1 has been shown to be a site-selective C-18 hydroxylase whereas the function of CYP3 is the site-selective epoxidation of the C-6/C-7 olefin that is present in some intermediate compounds. Finally, SYN2 and RAP2 are not required for avirulence in Pi33 resistant rice cultivars. The chain is Trans-enoyl reductase RAP2 from Pyricularia oryzae (strain 70-15 / ATCC MYA-4617 / FGSC 8958) (Rice blast fungus).